We begin with the raw amino-acid sequence, 401 residues long: 3-sulfinopropanoyl-CoA desulfinase (401 aa).

Residues 121-124, S130, and 153-156 each bind FAD; these read ICIS and YWIT. 243–244 contributes to the substrate binding site; it reads YN. FAD-binding positions include R272, Q339, S343, 366-370, and Q387; that span reads GGTAQ.

Belongs to the acyl-CoA dehydrogenase family. Homotetramer. It depends on FAD as a cofactor.

The enzyme catalyses 3-sulfinopropanoyl-CoA + H2O = propanoyl-CoA + sulfite + H(+). Functionally, catalyzes the conversion 3-sulfinopropanoyl-CoA (3SP-CoA) to propanoyl-CoA by abstraction of sulfite. Does not show dehydrogenase activity. Involved in the degradation of 3,3'-dithiodipropionate (DTDP), a sulfur-containing precursor substrate for biosynthesis of polythioesters (PTEs). This Advenella mimigardefordensis (strain DSM 17166 / LMG 22922 / DPN7) protein is 3-sulfinopropanoyl-CoA desulfinase.